The primary structure comprises 199 residues: Small ribosomal subunit protein uS4 (199 aa).

One can recognise an S4 RNA-binding domain in the interval 91-154 (SRLDNLVYRM…RGLQLIKDAL (64 aa)).

This sequence belongs to the universal ribosomal protein uS4 family. As to quaternary structure, part of the 30S ribosomal subunit. Contacts protein S5. The interaction surface between S4 and S5 is involved in control of translational fidelity.

Functionally, one of the primary rRNA binding proteins, it binds directly to 16S rRNA where it nucleates assembly of the body of the 30S subunit. In terms of biological role, with S5 and S12 plays an important role in translational accuracy. The chain is Small ribosomal subunit protein uS4 from Brevibacillus brevis (strain 47 / JCM 6285 / NBRC 100599).